The sequence spans 211 residues: MQNNNTAISQLIEAGKWVSQKEWIPATGGNFSARTESGFVITASGQDKGKLTSEQFLQLDLQGKPLAGTKKRSAETQLHLSLYQLIPEAQCVLHTHSVAATVLSQITKSHKLDLTGYEMQKALTGFTSHLETLSIPIFNNDQDIDHLSLLVSDHHLHTPIEHGVLIRGHGLYAVGRNIDEVRRHLEVLEFLFSCELERLKITGIQASNNNK.

Positions 94 and 96 each coordinate Zn(2+).

This sequence belongs to the aldolase class II family. MtnB subfamily. It depends on Zn(2+) as a cofactor.

The enzyme catalyses 5-(methylsulfanyl)-D-ribulose 1-phosphate = 5-methylsulfanyl-2,3-dioxopentyl phosphate + H2O. It participates in amino-acid biosynthesis; L-methionine biosynthesis via salvage pathway; L-methionine from S-methyl-5-thio-alpha-D-ribose 1-phosphate: step 2/6. Catalyzes the dehydration of methylthioribulose-1-phosphate (MTRu-1-P) into 2,3-diketo-5-methylthiopentyl-1-phosphate (DK-MTP-1-P). This Pseudoalteromonas translucida (strain TAC 125) protein is Methylthioribulose-1-phosphate dehydratase.